We begin with the raw amino-acid sequence, 424 residues long: Serine hydroxymethyltransferase 1 (424 aa).

Residues leucine 125 and 129 to 131 (GHL) each bind (6S)-5,6,7,8-tetrahydrofolate. The residue at position 234 (lysine 234) is an N6-(pyridoxal phosphate)lysine.

It belongs to the SHMT family. Homodimer. Pyridoxal 5'-phosphate serves as cofactor.

It localises to the cytoplasm. It catalyses the reaction (6R)-5,10-methylene-5,6,7,8-tetrahydrofolate + glycine + H2O = (6S)-5,6,7,8-tetrahydrofolate + L-serine. It participates in one-carbon metabolism; tetrahydrofolate interconversion. It functions in the pathway amino-acid biosynthesis; glycine biosynthesis; glycine from L-serine: step 1/1. Functionally, catalyzes the reversible interconversion of serine and glycine with tetrahydrofolate (THF) serving as the one-carbon carrier. This reaction serves as the major source of one-carbon groups required for the biosynthesis of purines, thymidylate, methionine, and other important biomolecules. Also exhibits THF-independent aldolase activity toward beta-hydroxyamino acids, producing glycine and aldehydes, via a retro-aldol mechanism. The polypeptide is Serine hydroxymethyltransferase 1 (Burkholderia lata (strain ATCC 17760 / DSM 23089 / LMG 22485 / NCIMB 9086 / R18194 / 383)).